Consider the following 179-residue polypeptide: MAKLHDKYQETVSPELQKKFGFTSVMQVPRIEKITLNMGVGEAVADKKVMEHALRDMTAIAGQKPVVTVARKSVAGFKIREGYPIGCKVTLRGERMWEFLERLVDIAIPRIRDFRGMSTKSFDGRGNYAMGVREQIIFPEIQYDKIDKIRGMDIVITTSAKNDEEGRALLEAFNFPFKK.

Belongs to the universal ribosomal protein uL5 family. In terms of assembly, part of the 50S ribosomal subunit; part of the 5S rRNA/L5/L18/L25 subcomplex. Contacts the 5S rRNA and the P site tRNA. Forms a bridge to the 30S subunit in the 70S ribosome.

Functionally, this is one of the proteins that bind and probably mediate the attachment of the 5S RNA into the large ribosomal subunit, where it forms part of the central protuberance. In the 70S ribosome it contacts protein S13 of the 30S subunit (bridge B1b), connecting the 2 subunits; this bridge is implicated in subunit movement. Contacts the P site tRNA; the 5S rRNA and some of its associated proteins might help stabilize positioning of ribosome-bound tRNAs. The sequence is that of Large ribosomal subunit protein uL5 from Shewanella woodyi (strain ATCC 51908 / MS32).